Here is a 467-residue protein sequence, read N- to C-terminus: Glutamate--tRNA ligase (467 aa).

Residues 15 to 25 carry the 'HIGH' region motif; sequence PSPTGYLHVGG. The short motif at 249 to 253 is the 'KMSKS' region element; the sequence is KLSKR. ATP is bound at residue K252.

The protein belongs to the class-I aminoacyl-tRNA synthetase family. Glutamate--tRNA ligase type 1 subfamily. As to quaternary structure, monomer.

The protein localises to the cytoplasm. It carries out the reaction tRNA(Glu) + L-glutamate + ATP = L-glutamyl-tRNA(Glu) + AMP + diphosphate. Catalyzes the attachment of glutamate to tRNA(Glu) in a two-step reaction: glutamate is first activated by ATP to form Glu-AMP and then transferred to the acceptor end of tRNA(Glu). In Coprothermobacter proteolyticus (strain ATCC 35245 / DSM 5265 / OCM 4 / BT), this protein is Glutamate--tRNA ligase.